The primary structure comprises 242 residues: Large ribosomal subunit protein uL30x (242 aa).

This sequence belongs to the universal ribosomal protein uL30 family.

This chain is Large ribosomal subunit protein uL30x (RPL7C), found in Arabidopsis thaliana (Mouse-ear cress).